We begin with the raw amino-acid sequence, 321 residues long: Ribose-phosphate pyrophosphokinase (321 aa).

ATP is bound by residues 44–46 and 103–104; these read DGE and RQ. Mg(2+)-binding residues include His137 and Asp179. The active site involves Lys202. Residues Arg204, Asp228, and 232 to 236 contribute to the D-ribose 5-phosphate site; that span reads DTAGT.

The protein belongs to the ribose-phosphate pyrophosphokinase family. Class I subfamily. In terms of assembly, homohexamer. Mg(2+) serves as cofactor.

It localises to the cytoplasm. The enzyme catalyses D-ribose 5-phosphate + ATP = 5-phospho-alpha-D-ribose 1-diphosphate + AMP + H(+). The protein operates within metabolic intermediate biosynthesis; 5-phospho-alpha-D-ribose 1-diphosphate biosynthesis; 5-phospho-alpha-D-ribose 1-diphosphate from D-ribose 5-phosphate (route I): step 1/1. Functionally, involved in the biosynthesis of the central metabolite phospho-alpha-D-ribosyl-1-pyrophosphate (PRPP) via the transfer of pyrophosphoryl group from ATP to 1-hydroxyl of ribose-5-phosphate (Rib-5-P). This Staphylococcus aureus (strain COL) protein is Ribose-phosphate pyrophosphokinase.